A 635-amino-acid chain; its full sequence is Biosynthetic arginine decarboxylase (635 aa).

Lys100 is modified (N6-(pyridoxal phosphate)lysine). A substrate-binding site is contributed by 282-292; sequence LDIGGGLGVDY.

This sequence belongs to the Orn/Lys/Arg decarboxylase class-II family. SpeA subfamily. The cofactor is Mg(2+). It depends on pyridoxal 5'-phosphate as a cofactor.

It carries out the reaction L-arginine + H(+) = agmatine + CO2. It participates in amine and polyamine biosynthesis; agmatine biosynthesis; agmatine from L-arginine: step 1/1. Functionally, catalyzes the biosynthesis of agmatine from arginine. This chain is Biosynthetic arginine decarboxylase, found in Geobacter sp. (strain M21).